Consider the following 157-residue polypeptide: Transcription elongation factor GreB (157 aa).

Belongs to the GreA/GreB family. GreB subfamily.

Its function is as follows. Necessary for efficient RNA polymerase transcription elongation past template-encoded arresting sites. The arresting sites in DNA have the property of trapping a certain fraction of elongating RNA polymerases that pass through, resulting in locked ternary complexes. Cleavage of the nascent transcript by cleavage factors such as GreA or GreB allows the resumption of elongation from the new 3'terminus. GreB releases sequences of up to 9 nucleotides in length. The sequence is that of Transcription elongation factor GreB from Salmonella typhimurium (strain LT2 / SGSC1412 / ATCC 700720).